The following is a 407-amino-acid chain: Argininosuccinate synthase (407 aa).

Residues 16–24 (AYSGGLDTS) and alanine 44 each bind ATP. Positions 96 and 101 each coordinate L-citrulline. ATP is bound at residue glycine 126. Residues threonine 128, asparagine 132, and aspartate 133 each contribute to the L-aspartate site. Asparagine 132 is a binding site for L-citrulline. The L-citrulline site is built by arginine 136, serine 185, serine 194, glutamate 270, and tyrosine 282.

The protein belongs to the argininosuccinate synthase family. Type 1 subfamily. Homotetramer.

It localises to the cytoplasm. It catalyses the reaction L-citrulline + L-aspartate + ATP = 2-(N(omega)-L-arginino)succinate + AMP + diphosphate + H(+). The protein operates within amino-acid biosynthesis; L-arginine biosynthesis; L-arginine from L-ornithine and carbamoyl phosphate: step 2/3. This chain is Argininosuccinate synthase, found in Shewanella denitrificans (strain OS217 / ATCC BAA-1090 / DSM 15013).